The chain runs to 110 residues: UPF0060 membrane protein Pcryo_1341 (110 aa).

Helical transmembrane passes span Val-7–Trp-27, Ser-33–Leu-53, Ala-63–Ile-83, and Thr-87–Pro-107.

Belongs to the UPF0060 family.

Its subcellular location is the cell inner membrane. The protein is UPF0060 membrane protein Pcryo_1341 of Psychrobacter cryohalolentis (strain ATCC BAA-1226 / DSM 17306 / VKM B-2378 / K5).